Reading from the N-terminus, the 239-residue chain is Urease accessory protein UreE (239 aa).

The segment at 185–239 (VASPLDEPHGSGLHIHGIHSHGDGHSHSHDSHSHSHDSDHGHSHSHGDHDHDHKH) is disordered. The segment covering 204–239 (SHGDGHSHSHDSHSHSHDSDHGHSHSHGDHDHDHKH) has biased composition (basic and acidic residues).

Belongs to the UreE family.

Its subcellular location is the cytoplasm. Functionally, involved in urease metallocenter assembly. Binds nickel. Probably functions as a nickel donor during metallocenter assembly. The sequence is that of Urease accessory protein UreE from Yersinia frederiksenii.